Consider the following 219-residue polypeptide: NADH-quinone oxidoreductase subunit C (219 aa).

Belongs to the complex I 30 kDa subunit family. NDH-1 is composed of 14 different subunits. Subunits NuoB, C, D, E, F, and G constitute the peripheral sector of the complex.

The protein localises to the cell inner membrane. The catalysed reaction is a quinone + NADH + 5 H(+)(in) = a quinol + NAD(+) + 4 H(+)(out). In terms of biological role, NDH-1 shuttles electrons from NADH, via FMN and iron-sulfur (Fe-S) centers, to quinones in the respiratory chain. The immediate electron acceptor for the enzyme in this species is believed to be ubiquinone. Couples the redox reaction to proton translocation (for every two electrons transferred, four hydrogen ions are translocated across the cytoplasmic membrane), and thus conserves the redox energy in a proton gradient. The chain is NADH-quinone oxidoreductase subunit C from Methylorubrum populi (strain ATCC BAA-705 / NCIMB 13946 / BJ001) (Methylobacterium populi).